Here is a 202-residue protein sequence, read N- to C-terminus: Glycerol-3-phosphate acyltransferase (202 aa).

5 helical membrane passes run 6–26 (LTLGMILSAYLAGSISSAVLV), 56–76 (SAALVLFFDMLKGALPAYIAF), 82–102 (SVSLGIIAIAACLGHIFPIFF), 118–138 (APIGPELALLLMGSWVLMVLI), and 141–161 (YSSLAAIVTALLAPFYTWYLD).

It belongs to the PlsY family. Probably interacts with PlsX.

Its subcellular location is the cell inner membrane. The enzyme catalyses an acyl phosphate + sn-glycerol 3-phosphate = a 1-acyl-sn-glycero-3-phosphate + phosphate. The protein operates within lipid metabolism; phospholipid metabolism. Functionally, catalyzes the transfer of an acyl group from acyl-phosphate (acyl-PO(4)) to glycerol-3-phosphate (G3P) to form lysophosphatidic acid (LPA). This enzyme utilizes acyl-phosphate as fatty acyl donor, but not acyl-CoA or acyl-ACP. The chain is Glycerol-3-phosphate acyltransferase from Shewanella woodyi (strain ATCC 51908 / MS32).